The following is a 694-amino-acid chain: Beta-mannosyltransferase 8 (694 aa).

The Cytoplasmic portion of the chain corresponds to 1–11 (MKFPKLRKRTV). A helical transmembrane segment spans residues 12–29 (YWAVLTVFALFTIHFVFQ). At 30 to 694 (YKEHNSHRVQ…YLYDHASVNS (665 aa)) the chain is on the extracellular side. Residues N101 and N542 are each glycosylated (N-linked (GlcNAc...) asparagine).

It belongs to the BMT family.

The protein localises to the membrane. In terms of biological role, beta-mannosyltransferase involved in cell wall biosynthesis through beta-1,2-mannosylation of cell wall phosphopeptidomannan. Plays a role in the ability to produce hyphae in the presence of three bacterial species. This is Beta-mannosyltransferase 8 (BMT8) from Candida albicans (strain SC5314 / ATCC MYA-2876) (Yeast).